Consider the following 142-residue polypeptide: MKTFTAKPETVKRDWYVVDATGKTLGRLATELARRLRGKHKAEYTPHVDTGDYIIVLNADKVAVTGNKRTDKVYYHHTGHIGGIKQATFEEMIARRPERVIEIAVKGMLPKGPLGRAMFRKLKVYAGNEHNHAAQQPQVLDI.

This sequence belongs to the universal ribosomal protein uL13 family. As to quaternary structure, part of the 50S ribosomal subunit.

Functionally, this protein is one of the early assembly proteins of the 50S ribosomal subunit, although it is not seen to bind rRNA by itself. It is important during the early stages of 50S assembly. This is Large ribosomal subunit protein uL13 from Salmonella agona (strain SL483).